The following is a 557-amino-acid chain: MRSDMIKKGFDKAPHRSLLKATGLKDEDFDKPFIAICNSFIEIIPGHKHLNEFGKLVKEAVRAAGMVPFEFNTIGVDDGIAMGHIGMRYSLPSREIIADSVETVVNAHWFDGMICIPNCDKITPGMMMAALRINIPTVFVSGGPMAAGKTSKGEVVDLSSVFEGVGAYQSGKISEEELKDIEDHGCPSCGSCSGMFTANSMNCLCEVLGLALPGNGSILAIDPRREELIKEAAEKLKILIERDIKPRDIVTEEAIDDAFALDMAMGGSTNTVLHTLALAHEAGLDYDMSRIDAVSRRVPHLCKVSPASNWHMEDIDRAGGISAILKEMSRKEGVLHLDRITATGQTLRGNIAHAEIKDKEVIHSLENPHSEEGGLRILKGNLAKDGAVIKSGATEVKRFEGPCVIFNSQDEALAGIMLGKVKKGDVVVIRYEGPRGGPGMPEMLAPTSAIAGMGLGADVALLTDGRFSGASRGISVGHISPEAAAGGTIALLEQGDIVCIDVEERLLEVRVSDEELDKRKKEWKRPEPKVKTGWLGRYAQMVTSANTGAVLKVPNFD.

Aspartate 78 contributes to the Mg(2+) binding site. Cysteine 119 contributes to the [2Fe-2S] cluster binding site. Mg(2+)-binding residues include aspartate 120 and lysine 121. N6-carboxylysine is present on lysine 121. Residue cysteine 192 participates in [2Fe-2S] cluster binding. Mg(2+) is bound at residue glutamate 442. Serine 468 acts as the Proton acceptor in catalysis.

This sequence belongs to the IlvD/Edd family. As to quaternary structure, homodimer. [2Fe-2S] cluster serves as cofactor. Requires Mg(2+) as cofactor.

The catalysed reaction is (2R)-2,3-dihydroxy-3-methylbutanoate = 3-methyl-2-oxobutanoate + H2O. It catalyses the reaction (2R,3R)-2,3-dihydroxy-3-methylpentanoate = (S)-3-methyl-2-oxopentanoate + H2O. Its pathway is amino-acid biosynthesis; L-isoleucine biosynthesis; L-isoleucine from 2-oxobutanoate: step 3/4. The protein operates within amino-acid biosynthesis; L-valine biosynthesis; L-valine from pyruvate: step 3/4. Functions in the biosynthesis of branched-chain amino acids. Catalyzes the dehydration of (2R,3R)-2,3-dihydroxy-3-methylpentanoate (2,3-dihydroxy-3-methylvalerate) into 2-oxo-3-methylpentanoate (2-oxo-3-methylvalerate) and of (2R)-2,3-dihydroxy-3-methylbutanoate (2,3-dihydroxyisovalerate) into 2-oxo-3-methylbutanoate (2-oxoisovalerate), the penultimate precursor to L-isoleucine and L-valine, respectively. This is Dihydroxy-acid dehydratase from Bacillus cereus (strain ZK / E33L).